Reading from the N-terminus, the 184-residue chain is C-phycoerythrin beta chain (184 aa).

Residues C48 and C59 each contribute to the (2R,3E)-phycoerythrobilin site. N70 is modified (N4-methylasparagine). Residues C80 and C165 each contribute to the (2R,3E)-phycoerythrobilin site.

This sequence belongs to the phycobiliprotein family. In terms of assembly, heterodimer of an alpha and a beta chain. Contains three covalently linked bilin chromophores.

The protein resides in the cellular thylakoid membrane. Light-harvesting photosynthetic bile pigment-protein from the phycobiliprotein complex. This is C-phycoerythrin beta chain (cpeB) from Microchaete diplosiphon (Fremyella diplosiphon).